The chain runs to 258 residues: (7aS)-7a-methyl-1,5-dioxo-2,3,5,6,7,7a-hexahydro-1H-indene-carboxyl-CoA hydrolase (258 aa).

It belongs to the enoyl-CoA hydratase/isomerase family.

The enzyme catalyses (7aS)-7a-methyl-1,5-dioxo-2,3,5,6,7,7a-hexahydro-1H-indene-carboxyl-CoA + H2O = (3E)-2-(2-carboxylatoethyl)-3-methyl-6-oxocyclohex-1-ene-1-carboxyl-CoA + H(+). It functions in the pathway steroid metabolism; cholesterol degradation. Its function is as follows. Involved in the final steps of cholesterol and steroid degradation. Catalyzes the hydrolytic ring D opening of (7aS)-7a-methyl-1,5-dioxo-2,3,5,6,7,7a-hexahydro-1H-indene-carboxyl-CoA (HIEC-CoA) to (3E)-2-(2-carboxylatoethyl)-3-methyl-6-oxocyclohex-1-ene-1-carboxyl-CoA (COCHEA-CoA). The chain is (7aS)-7a-methyl-1,5-dioxo-2,3,5,6,7,7a-hexahydro-1H-indene-carboxyl-CoA hydrolase from Rhodococcus jostii (strain RHA1).